The chain runs to 153 residues: Transcriptional repressor NrdR (153 aa).

A zinc finger lies at 3–34; the sequence is CPSCSHNGTRVLDSRPVDEGRSIRRRRECESC. One can recognise an ATP-cone domain in the interval 49-139; sequence LIVVKKEGTR…VYRQFKDLNV (91 aa).

This sequence belongs to the NrdR family. It depends on Zn(2+) as a cofactor.

Its function is as follows. Negatively regulates transcription of bacterial ribonucleotide reductase nrd genes and operons by binding to NrdR-boxes. The polypeptide is Transcriptional repressor NrdR (Bacillus anthracis (strain A0248)).